The chain runs to 891 residues: Dynein axonemal intermediate chain 3 (891 aa).

Residues 1–16 (MAPKQKKKSSRRKKSP) are compositionally biased toward basic residues. The segment at 1–27 (MAPKQKKKSSRRKKSPKPILAASEDME) is disordered. WD repeat units follow at residues 395–435 (ESPD…DRIE), 477–533 (GHKR…PLTP), 670–709 (IHDG…GPLL), and 713–753 (CAPK…HEPA). Residues 817–861 (HLEYVEQRKKIREQEKKEMEQEMAKKKVKIYQKSKEQMEAELKMD) are a coiled coil.

In terms of assembly, interacts with ACTR2; this interaction reduces binding of the Arp2/3 complex to the VCA domain of nucleation promoting factors. Part of the multisubunit axonemal dynein complex formed at least of two heavy chains and a number of intermediate and light chains. Found in a associated with the catalytic heavy chain DNAH2, the intermediate chain DNAI4, and the light chain DYNLT1.

The protein localises to the cytoplasm. Its function is as follows. Acts as a negative regulator of cell migration, invasion, and metastasis downstream of p53/TP53, through inhibition of Arp2/3 complex-mediated actin polymerization. Via its association with the multisubunit axonemal dynein complex, is potentially involved in the regulation of cilia function. May play a role in osteogenesis of dental tissue-derived mesenchymal stem cells. The protein is Dynein axonemal intermediate chain 3 (DNAI3) of Macaca fascicularis (Crab-eating macaque).